An 886-amino-acid chain; its full sequence is uncharacterized protein (886 aa).

The signal sequence occupies residues 1–20; it reads MKIIKSLILLVLFMASPAKG. The next 5 helical transmembrane spans lie at 520-540, 609-629, 647-667, 680-700, and 779-799; these read VTIF…VEVV, LLFI…IITI, VIAF…IILM, ISIL…FLLI, and LLFY…TIVV. Residues 856–886 form a disordered region; that stretch reads EARKPQGGGEHTGKFFQNRNDVKPEQTERND. A compositionally biased stretch (basic and acidic residues) spans 875–886; sequence NDVKPEQTERND.

This sequence belongs to the TrbL/VirB6 family.

Its subcellular location is the cell membrane. This is an uncharacterized protein from Rickettsia bellii (strain RML369-C).